Here is a 67-residue protein sequence, read N- to C-terminus: Large ribosomal subunit protein uL29 (67 aa).

Belongs to the universal ribosomal protein uL29 family.

The sequence is that of Large ribosomal subunit protein uL29 from Agathobacter rectalis (strain ATCC 33656 / DSM 3377 / JCM 17463 / KCTC 5835 / VPI 0990) (Eubacterium rectale).